The following is a 394-amino-acid chain: Actin-related protein 2 (394 aa).

Residues 160–162 (GDG), 214–218 (RMIKE), and 305–310 (GGSTMY) contribute to the ATP site.

The protein belongs to the actin family. ARP2 subfamily. In terms of assembly, component of the Arp2/3 complex composed of ACTR2/ARP2, ACTR3/ARP3, ARPC1B/p41-ARC, ARPC2/p34-ARC, ARPC3/p21-ARC, ARPC4/p20-ARC and ARPC5/p16-ARC.

It localises to the cytoplasm. The protein resides in the cytoskeleton. It is found in the cell projection. Its subcellular location is the nucleus. Its function is as follows. ATP-binding component of the Arp2/3 complex, a multiprotein complex that mediates actin polymerization upon stimulation by nucleation-promoting factor (NPF). The Arp2/3 complex mediates the formation of branched actin networks in the cytoplasm, providing the force for cell motility. Seems to contact the pointed end of the daughter actin filament. In addition to its role in the cytoplasmic cytoskeleton, the Arp2/3 complex also promotes actin polymerization in the nucleus, thereby regulating gene transcription and repair of damaged DNA. The Arp2/3 complex promotes homologous recombination (HR) repair in response to DNA damage by promoting nuclear actin polymerization, leading to drive motility of double-strand breaks (DSBs). This chain is Actin-related protein 2 (ACTR2), found in Gallus gallus (Chicken).